A 334-amino-acid chain; its full sequence is Ribosomal RNA small subunit methyltransferase H (334 aa).

S-adenosyl-L-methionine-binding positions include 39–41 (GGH), Asp-59, Phe-83, Asp-100, and Gln-107. The tract at residues 303–334 (ERTQAHGAERSDMRRAERPDARRAEHGEVLPP) is disordered.

It belongs to the methyltransferase superfamily. RsmH family.

The protein resides in the cytoplasm. It catalyses the reaction cytidine(1402) in 16S rRNA + S-adenosyl-L-methionine = N(4)-methylcytidine(1402) in 16S rRNA + S-adenosyl-L-homocysteine + H(+). Specifically methylates the N4 position of cytidine in position 1402 (C1402) of 16S rRNA. The chain is Ribosomal RNA small subunit methyltransferase H from Verminephrobacter eiseniae (strain EF01-2).